Here is a 255-residue protein sequence, read N- to C-terminus: Propionicin-F (255 aa).

2 consecutive propeptides follow at residues 1–101 (MNTK…RVSC) and 145–255 (GTPT…DETV).

It is found in the secreted. Its function is as follows. Bacteriocin with specific antibacterial activity against strains of P.freudenreichii. No antibacterial activity was detected against P.acidipropionici, P.jensenii and P.thoenii. The chain is Propionicin-F from Propionibacterium freudenreichii subsp. freudenreichii.